The primary structure comprises 1063 residues: Structural polyprotein (1063 aa).

Residues 1–131 (MASTTPITME…LGPPTNPFQA (131 aa)) are disordered. Residues 30–69 (GASQSRRPRPPRQRDSSTSGDDSGRDSGGPRRRRGNRGRG) are human C1QBP/SF2P32-binding. At Ser46 the chain carries Phosphoserine; by host. The span at 59–69 (PRRRRGNRGRG) shows a compositional bias: basic residues. Positions 70–87 (QRRDWSRAPPPPEERQET) are enriched in basic and acidic residues. The span at 93 to 107 (APKPSRAPPQQPQPP) shows a compositional bias: pro residues. Cys153 and Cys197 are joined by a disulfide. Residues 279 to 300 (GAPQAFLAGLLLATVAVGTARA) are functions as E2 signal peptide. At 301 to 534 (GLQPRADMAA…LWLATANALS (234 aa)) the chain is on the extracellular side. Asn353, Asn371, Asn410, and Asn429 each carry an N-linked (GlcNAc...) asparagine; by host glycan. A helical transmembrane segment spans residues 535–555 (LDHALAAFVLLVPWVLIFMVC). Topologically, residues 556–582 (RRACRRRGAAAALTAVVLQGYNPPAYG) are cytoplasmic. The interval 563–582 (GAAAALTAVVLQGYNPPAYG) is functions as E1 signal peptide. Residues 583 to 1028 (EEAFTYLCTA…QTWAEWAAAH (446 aa)) lie on the Extracellular side of the membrane. 8 disulfides stabilise this stretch: Cys590/Cys595, Cys619/Cys824, Cys641/Cys653, Cys699/Cys712, Cys758/Cys767, Cys807/Cys817, Cys931/Cys934, and Cys950/Cys983. Asn658 is a glycosylation site (N-linked (GlcNAc...) asparagine; by host). Residues Asn670 and Ala671 each contribute to the Ca(2+) site. Residues Asp718 and Thr719 each coordinate Ca(2+). Residues Asn759 and Asn791 are each glycosylated (N-linked (GlcNAc...) asparagine; by host). O-linked (GalNAc...) threonine; by host glycosylation is found at Thr1011 and Thr1012. Residues 1029 to 1049 (WWQLTLGAICALPLAGLLACC) traverse the membrane as a helical segment. Residues 1050–1063 (AKCLYYLRGAIAPR) lie on the Extracellular side of the membrane.

In terms of assembly, homodimer; further assembles into homooligomer. Interacts with human C1QBP. Interacts (via N-terminus) with protease/methyltransferase p150. As to quaternary structure, heterodimer with spike glycoprotein E2. Heterodimer with spike glycoprotein E1. In terms of processing, structural polyprotein: Specific enzymatic cleavages in vivo yield mature proteins. Two signal peptidase-mediated cleavages within the polyprotein produce the structural proteins capsid, E2, and E1. The E2 signal peptide remains attached to the C-terminus of the capsid protein after cleavage by the signal peptidase. Another signal peptide at E2 C-terminus directs E1 to the ER, with a similar mechanism. Post-translationally, contains three N-linked oligosaccharides. Capsid is phosphorylated on Ser-46 by host. This phosphorylation negatively regulates capsid protein RNA-binding activity. Dephosphorylated by human PP1A.

The protein resides in the virion. Its subcellular location is the host cytoplasm. It localises to the host mitochondrion. The protein localises to the virion membrane. It is found in the host Golgi apparatus membrane. In terms of biological role, capsid protein interacts with genomic RNA and assembles into icosahedric core particles 65-70 nm in diameter. The resulting nucleocapsid eventually associates with the cytoplasmic domain of E2 at the cell membrane, leading to budding and formation of mature virions from host Golgi membranes. Phosphorylation negatively regulates RNA-binding activity, possibly delaying virion assembly during the viral replication phase. Capsid protein dimerizes and becomes disulfide-linked in the virion. Modulates genomic RNA replication. Modulates subgenomic RNA synthesis by interacting with human C1QBP/SF2P32. Induces both perinuclear clustering of mitochondria and the formation of electron-dense intermitochondrial plaques, both hallmarks of rubella virus infected cells. Induces apoptosis when expressed in transfected cells. Its function is as follows. Responsible for viral attachment to target host cell, by binding to the cell receptor. Its transport to the plasma membrane depends on interaction with E1 protein. The surface glycoproteins display an irregular helical organization and a pseudo-tetrameric inner nucleocapsid arrangement. Functionally, class II viral fusion protein. Fusion activity is inactive as long as E1 is bound to E2 in mature virion. After virus attachment to target cell and clathrin-mediated endocytosis, acidification of the endosome would induce dissociation of E1/E2 heterodimer and concomitant trimerization of the E1 subunits. This E1 homotrimer is fusion active, and promotes release of viral nucleocapsid in cytoplasm after endosome and viral membrane fusion. The cytoplasmic tail of spike glycoprotein E1 modulates virus release. The surface glycoproteins display an irregular helical organization and a pseudo-tetrameric inner nucleocapsid arrangement. This Rubella virus (strain Therien) (RUBV) protein is Structural polyprotein.